We begin with the raw amino-acid sequence, 353 residues long: Replication-associated protein (353 aa).

Residues 8-116 (RVQSKNYFLT…DGVTIEWGQF (109 aa)) form the CRESS-DNA virus Rep endonuclease domain. The RCR-1 signature appears at 15 to 18 (FLTY). Glutamate 49, histidine 57, and histidine 59 together coordinate a divalent metal cation. Positions 57–59 (HLH) match the RCR-2 motif. Residue tyrosine 103 is the For DNA cleavage activity of the active site. The short motif at 103-106 (YIDK) is the RCR-3 element. Aspartate 107 provides a ligand contact to a divalent metal cation. The segment at 143–153 (IESALTILKEE) is binding to RBR1. The segment at 156–176 (KDYVLQNHNIRSNLERIFFKV) is oligomerization. Residue 222–229 (GDSRTGKT) participates in ATP binding.

It belongs to the geminiviridae Rep protein family. As to quaternary structure, homooligomer. Interacts with the replication enhancer protein (REn). Interacts with host retinoblastoma-related protein 1 (RBR1), and may thereby induce the transcription of host replicative enzymes even if the cell is not dividing anymore. Interacts with host PCNA. Interacts with host SCE1 protein. It depends on Mg(2+) as a cofactor. Mn(2+) is required as a cofactor.

It localises to the host nucleus. Functionally, essential for the replication of viral ssDNA. The closed circular ssDNA genome is first converted to a superhelical dsDNA. Rep binds a specific region at the genome origin of replication. It introduces an endonucleolytic nick within the conserved sequence 5'-TAATATTAC-3' in the intergenic region of the genome present in all geminiviruses, thereby initiating the rolling circle replication (RCR). Following cleavage, binds covalently to the 5'-phosphate of DNA as a tyrosyl ester. The cleavage gives rise to a free 3'-OH that serves as a primer for the cellular DNA polymerase. The polymerase synthesizes the (+) strand DNA by rolling circle mechanism. After one round of replication, a Rep-catalyzed nucleotidyl transfer reaction releases a circular single-stranded virus genome, thereby terminating the replication. Displays origin-specific DNA cleavage, nucleotidyl transferase, ATPase and helicase activities. This chain is Replication-associated protein, found in Macroptilium lathyroides (Lima bean).